The sequence spans 110 residues: Parvalbumin alpha (110 aa).

Ser-2 is subject to N-acetylserine. Ser-2 and Ser-24 each carry phosphoserine. EF-hand domains are found at residues Lys-39–Asp-74 and Leu-78–Ser-110. Asp-52, Asp-54, Ser-56, Phe-58, Glu-60, Glu-63, Asp-91, Asp-93, Asp-95, Lys-97, and Glu-102 together coordinate Ca(2+).

Belongs to the parvalbumin family.

Functionally, in muscle, parvalbumin is thought to be involved in relaxation after contraction. It binds two calcium ions. The protein is Parvalbumin alpha (PVALB) of Bos taurus (Bovine).